The chain runs to 688 residues: Potassium-transporting ATPase ATP-binding subunit (688 aa).

The next 4 helical transmembrane spans lie at Pro-34–Leu-54, Ala-62–Ala-82, Val-219–Leu-239, and Val-260–Ile-280. The 4-aspartylphosphate intermediate role is filled by Asp-313. ATP contacts are provided by residues Asp-350, Glu-354, Phe-383–Ser-390, and Lys-401. 2 residues coordinate Mg(2+): Asp-524 and Asp-528. 3 helical membrane-spanning segments follow: residues Phe-594–Met-614, Ala-622–Leu-642, and Gly-667–Met-687.

It belongs to the cation transport ATPase (P-type) (TC 3.A.3) family. Type IA subfamily. The system is composed of three essential subunits: KdpA, KdpB and KdpC.

It is found in the cell inner membrane. It carries out the reaction K(+)(out) + ATP + H2O = K(+)(in) + ADP + phosphate + H(+). In terms of biological role, part of the high-affinity ATP-driven potassium transport (or Kdp) system, which catalyzes the hydrolysis of ATP coupled with the electrogenic transport of potassium into the cytoplasm. This subunit is responsible for energy coupling to the transport system and for the release of the potassium ions to the cytoplasm. In Yersinia enterocolitica serotype O:8 / biotype 1B (strain NCTC 13174 / 8081), this protein is Potassium-transporting ATPase ATP-binding subunit.